The sequence spans 138 residues: MATKRLFGATRTWAGWGAWELLNPATSGRLLARDYAKKPVMKGAKSGKGAVTSEALKDPDVCTDPVQLTTYAMGVNIYKEGQDVPLKPDAEYPEWLFEMNLGPPKTLEELDPESREYWRRLRKQNIWRHNRLSKNKRL.

The N-terminal 14 residues, 1 to 14, are a transit peptide targeting the mitochondrion; that stretch reads MATKRLFGATRTWA.

The protein belongs to the mitochondrion-specific ribosomal protein mL54 family. In terms of assembly, component of the mitochondrial large ribosomal subunit (mt-LSU). Mature mammalian 55S mitochondrial ribosomes consist of a small (28S) and a large (39S) subunit. The 28S small subunit contains a 12S ribosomal RNA (12S mt-rRNA) and 30 different proteins. The 39S large subunit contains a 16S rRNA (16S mt-rRNA), a copy of mitochondrial valine transfer RNA (mt-tRNA(Val)), which plays an integral structural role, and 52 different proteins.

It localises to the mitochondrion. The chain is Large ribosomal subunit protein mL54 (MRPL54) from Homo sapiens (Human).